Consider the following 1152-residue polypeptide: DNA-directed RNA polymerase subunit beta' (1152 aa).

C60, C62, C75, and C78 together coordinate Zn(2+). Mg(2+) is bound by residues D449, D451, and D453. Positions 779, 853, 860, and 863 each coordinate Zn(2+).

Belongs to the RNA polymerase beta' chain family. The RNAP catalytic core consists of 2 alpha, 1 beta, 1 beta' and 1 omega subunit. When a sigma factor is associated with the core the holoenzyme is formed, which can initiate transcription. Requires Mg(2+) as cofactor. It depends on Zn(2+) as a cofactor.

The enzyme catalyses RNA(n) + a ribonucleoside 5'-triphosphate = RNA(n+1) + diphosphate. Its function is as follows. DNA-dependent RNA polymerase catalyzes the transcription of DNA into RNA using the four ribonucleoside triphosphates as substrates. This is DNA-directed RNA polymerase subunit beta' from Carboxydothermus hydrogenoformans (strain ATCC BAA-161 / DSM 6008 / Z-2901).